The sequence spans 594 residues: Aspartate--tRNA(Asp/Asn) ligase (594 aa).

E173 is an L-aspartate binding site. Positions 197–200 (QLFK) are aspartate. Residue R219 participates in L-aspartate binding. ATP contacts are provided by residues 219 to 221 (RDE) and Q228. Residue H451 coordinates L-aspartate. E485 is an ATP binding site. R492 serves as a coordination point for L-aspartate. 537-540 (GWDR) provides a ligand contact to ATP. The interval 566–594 (PLTDAPAPITAQQRKESGIDAQPKRVQQA) is disordered.

Belongs to the class-II aminoacyl-tRNA synthetase family. Type 1 subfamily. As to quaternary structure, homodimer.

It localises to the cytoplasm. The catalysed reaction is tRNA(Asx) + L-aspartate + ATP = L-aspartyl-tRNA(Asx) + AMP + diphosphate. Functionally, aspartyl-tRNA synthetase with relaxed tRNA specificity since it is able to aspartylate not only its cognate tRNA(Asp) but also tRNA(Asn). Reaction proceeds in two steps: L-aspartate is first activated by ATP to form Asp-AMP and then transferred to the acceptor end of tRNA(Asp/Asn). The protein is Aspartate--tRNA(Asp/Asn) ligase of Mycobacterium tuberculosis (strain CDC 1551 / Oshkosh).